The sequence spans 1706 residues: Bifunctional hemolysin/adenylate cyclase (1706 aa).

An a, catalytic region spans residues 1-399; that stretch reads MQQSHQAGYA…RRPSLGAVER (399 aa). Residue 349 to 356 coordinates ATP; sequence AYGVAGKS. The interval 383–405 is disordered; it reads VPASPGLRRPSLGAVERQDSGYD. The interval 400-912 is b, Ala/Gly-rich; it reads QDSGYDSLDG…LKHSIKLDVI (513 aa). Residues 500–698 form a required for interaction with CyaC region; that stretch reads LSAAVFGLGE…SVVGAPVAVV (199 aa). Residues lysine 860 and lysine 983 are each lipidated (N6-palmitoyl lysine). The c stretch occupies residues 913-1656; it reads GGDGDDVVLA…RDADHRVEII (744 aa). Hemolysin-type calcium-binding repeat units lie at residues 1014–1031, 1032–1049, 1050–1067, 1155–1172, 1173–1190, 1279–1296, 1297–1314, 1315–1332, 1335–1352, 1411–1428, 1429–1446, 1447–1464, 1468–1484, 1537–1554, 1555–1572, 1573–1590, and 1603–1620; these read IGGA…DNFL, AGGS…NDTL, VGGE…DDVF, WGHD…DDIL, RGGL…NDIF, MGQG…DDLL, FGGD…NDTL, YGGL…NDWF, TQAR…VDTV, TGDA…ADVL, AGGE…DDQL, SGDA…DDWF, AANA…RDTV, IGDA…NDVL, SGGA…SDLL, SGDA…DDTY, and ESGG…ADQL. The interval 1657–1706 is d, Asp/Gly-rich; the sequence is HAANQAVDQAGIEKLVEAMAQYPDPGAAAAAPPAARVPDTLMQSLAVNWR.

The protein in the N-terminal section; belongs to the adenylyl cyclase class-2 family. In the C-terminal section; belongs to the RTX prokaryotic toxin family. In terms of processing, released in a processed form. Palmitoylated at Lys-860 and Lys-983 by CyaC. The toxin only becomes active when modified in position Lys-983: palmitoylation is required for efficient membrane insertion and pore formation of the acylated Hemolysin chain.

It localises to the secreted. Its subcellular location is the host cell membrane. The catalysed reaction is ATP = 3',5'-cyclic AMP + diphosphate. Activated by host calmodulin. Bifunctional adenylate cyclase toxin-hemolysin that plays a crucial role in host colonization. It causes whooping cough by acting on mammalian cells by elevating cAMP-concentration and thus disrupts normal cell function. Its function is as follows. Adenylate cyclase that is activated by host intracellular calmodulin and catalyzes un-regulated conversion of ATP to cAMP, thereby impairing microbicidal functions of immune effector cells and inducing apoptosis of lung macrophages. Functionally, hemolysin that forms small cation-selective membrane channels, leading to hemolytic activity. The hemolytic activity of CyaA is weak compared with that of the HlyA of E.coli. The polypeptide is Bifunctional hemolysin/adenylate cyclase (cya) (Bordetella pertussis (strain Tohama I / ATCC BAA-589 / NCTC 13251)).